Consider the following 360-residue polypeptide: DNA polymerase IV (360 aa).

A UmuC domain is found at 9–191 (IMHLDIDAFY…LNINKIPYIG (183 aa)). Residues aspartate 13 and aspartate 108 each coordinate Mg(2+). Glutamate 109 is a catalytic residue.

The protein belongs to the DNA polymerase type-Y family. In terms of assembly, monomer. Mg(2+) is required as a cofactor.

The protein localises to the cytoplasm. The catalysed reaction is DNA(n) + a 2'-deoxyribonucleoside 5'-triphosphate = DNA(n+1) + diphosphate. Poorly processive, error-prone DNA polymerase involved in untargeted mutagenesis. Copies undamaged DNA at stalled replication forks, which arise in vivo from mismatched or misaligned primer ends. These misaligned primers can be extended by PolIV. Exhibits no 3'-5' exonuclease (proofreading) activity. May be involved in translesional synthesis, in conjunction with the beta clamp from PolIII. In Ureaplasma parvum serovar 3 (strain ATCC 27815 / 27 / NCTC 11736), this protein is DNA polymerase IV.